We begin with the raw amino-acid sequence, 410 residues long: Chloride intracellular channel protein 5 (410 aa).

Positions 191–194 (CPFS) match the G-site motif. The chain crosses the membrane as a helical span at residues 193–213 (FSQRLFMILWLKGVVFNVTTV). Positions 260–400 (YPKLAAKHRE…AADSEIELAY (141 aa)) constitute a GST C-terminal domain.

It belongs to the chloride channel CLIC family. As to quaternary structure, component of a multimeric complex consisting of several cytoskeletal proteins, including actin, ezrin, alpha-actinin, gelsolin, and IQGAP1. Interacts with AKAP9. Interacts with TPRN. TPRN, CLIC5 and PTPQR form concentric rings at the base of stereocilia and may form a complex. Interacts with EZR, MYO6 and RDX; the proteins may work together as a complex to stabilize linkages between the plasma membrane and subjacent actin cytoskeleton at the stereocilium base. As to expression, widely expressed in both fetal and adult human tissues. Isoform 1 is expressed in renal glomeruli endothelial cells and podocytes (at protein level).

Its subcellular location is the cytoplasm. It is found in the cytoskeleton. The protein localises to the cell cortex. The protein resides in the membrane. It localises to the apical cell membrane. Its subcellular location is the mitochondrion. It is found in the cell projection. The protein localises to the stereocilium. The protein resides in the golgi apparatus. It localises to the microtubule organizing center. Its subcellular location is the centrosome. The enzyme catalyses chloride(in) = chloride(out). The catalysed reaction is Na(+)(in) = Na(+)(out). It catalyses the reaction K(+)(in) = K(+)(out). Inhibited by F-actin. Its function is as follows. In the soluble state, catalyzes glutaredoxin-like thiol disulfide exchange reactions with reduced glutathione as electron donor. Can insert into membranes and form non-selective ion channels almost equally permeable to Na(+), K(+) and Cl(-). Required for normal hearing. It is necessary for the formation of stereocilia in the inner ear and normal development of the organ of Corti. May play a role in the regulation of transepithelial ion absorption and secretion. Is required for the development and/or maintenance of the proper glomerular endothelial cell and podocyte architecture. Plays a role in formation of the lens suture in the eye, which is important for normal optical properties of the lens. The polypeptide is Chloride intracellular channel protein 5 (Homo sapiens (Human)).